The following is a 260-amino-acid chain: MKIKDYAVDTARAVAFLSRIPMPQSLFKGYDGRLGRLVRAFPFAGIVIGFIPALALLLLLGLRADPLMAALIALSIQVLVTGALHEDGLADTADGIGGGKSREQSLLIMKDSRIGTYGAIALILSLAIRAAALAVIARHSSPLTAALAIPAVAALSRGAIAWHWQRLAPAKADGVAASTGQPDEAAMQFALASAGLVAALLIWPAFGLRPLVASLLATGIAGFAFTAFIRRKLAGHTGDTLGATQQICEIATLCALATAL.

6 helical membrane-spanning segments follow: residues 40–60 (AFPF…LLLL), 64–84 (ADPL…TGAL), 117–137 (YGAI…AVIA), 142–162 (PLTA…AIAW), 188–208 (QFAL…AFGL), and 209–229 (RPLV…TAFI).

Belongs to the CobS family. Mg(2+) serves as cofactor.

It localises to the cell inner membrane. The enzyme catalyses alpha-ribazole + adenosylcob(III)inamide-GDP = adenosylcob(III)alamin + GMP + H(+). It carries out the reaction alpha-ribazole 5'-phosphate + adenosylcob(III)inamide-GDP = adenosylcob(III)alamin 5'-phosphate + GMP + H(+). The protein operates within cofactor biosynthesis; adenosylcobalamin biosynthesis; adenosylcobalamin from cob(II)yrinate a,c-diamide: step 7/7. Functionally, joins adenosylcobinamide-GDP and alpha-ribazole to generate adenosylcobalamin (Ado-cobalamin). Also synthesizes adenosylcobalamin 5'-phosphate from adenosylcobinamide-GDP and alpha-ribazole 5'-phosphate. This chain is Adenosylcobinamide-GDP ribazoletransferase, found in Rhizobium johnstonii (strain DSM 114642 / LMG 32736 / 3841) (Rhizobium leguminosarum bv. viciae).